The primary structure comprises 73 residues: DNA-directed RNA polymerase subunit Rpo10 (73 aa).

Zn(2+) is bound by residues C7, C10, C44, and C45.

The protein belongs to the archaeal Rpo10/eukaryotic RPB10 RNA polymerase subunit family. Part of the RNA polymerase complex. Forms an Rpo3-Rpo10-Rpo11-Rpo12 complex upon coexpression. The cofactor is Zn(2+).

Its subcellular location is the cytoplasm. It carries out the reaction RNA(n) + a ribonucleoside 5'-triphosphate = RNA(n+1) + diphosphate. Functionally, DNA-dependent RNA polymerase (RNAP) catalyzes the transcription of DNA into RNA using the four ribonucleoside triphosphates as substrates. The sequence is that of DNA-directed RNA polymerase subunit Rpo10 from Methanocaldococcus jannaschii (strain ATCC 43067 / DSM 2661 / JAL-1 / JCM 10045 / NBRC 100440) (Methanococcus jannaschii).